Reading from the N-terminus, the 522-residue chain is Type-2 serine--tRNA ligase (522 aa).

Ala-319 provides a ligand contact to L-serine. Cys-321 lines the Zn(2+) pocket. Arg-350 provides a ligand contact to L-serine. ATP contacts are provided by residues 350 to 352 (RWE) and 361 to 362 (RV). Position 367 to 369 (367 to 369 (RIE)) interacts with L-serine. The Zn(2+) site is built by Glu-369 and Cys-476. Arg-483 is a binding site for ATP.

The protein belongs to the class-II aminoacyl-tRNA synthetase family. Type-2 seryl-tRNA synthetase subfamily. Homodimer. The cofactor is Zn(2+).

Its subcellular location is the cytoplasm. The catalysed reaction is tRNA(Ser) + L-serine + ATP = L-seryl-tRNA(Ser) + AMP + diphosphate + H(+). It carries out the reaction tRNA(Sec) + L-serine + ATP = L-seryl-tRNA(Sec) + AMP + diphosphate + H(+). The protein operates within aminoacyl-tRNA biosynthesis; selenocysteinyl-tRNA(Sec) biosynthesis; L-seryl-tRNA(Sec) from L-serine and tRNA(Sec): step 1/1. Functionally, catalyzes the attachment of serine to tRNA(Ser). Is also able to aminoacylate tRNA(Sec) with serine, to form the misacylated tRNA L-seryl-tRNA(Sec), which will be further converted into selenocysteinyl-tRNA(Sec). The sequence is that of Type-2 serine--tRNA ligase (serS) from Methanococcus aeolicus (strain ATCC BAA-1280 / DSM 17508 / OCM 812 / Nankai-3).